The following is a 79-amino-acid chain: Defensin-like protein 117 (79 aa).

Residues 1 to 24 (MTTTKTMLVAFVLTLFFVISSVHC) form the signal peptide. Disulfide bonds link Cys40–Cys75, Cys46–Cys68, Cys53–Cys73, and Cys57–Cys74.

This sequence belongs to the DEFL family.

The protein localises to the secreted. The polypeptide is Defensin-like protein 117 (Arabidopsis thaliana (Mouse-ear cress)).